The primary structure comprises 154 residues: Deoxyuridine 5'-triphosphate nucleotidohydrolase (154 aa).

Substrate is bound by residues 72–74 (RSG), N85, 89–91 (LID), and M99.

This sequence belongs to the dUTPase family. It depends on Mg(2+) as a cofactor.

It carries out the reaction dUTP + H2O = dUMP + diphosphate + H(+). The protein operates within pyrimidine metabolism; dUMP biosynthesis; dUMP from dCTP (dUTP route): step 2/2. Functionally, this enzyme is involved in nucleotide metabolism: it produces dUMP, the immediate precursor of thymidine nucleotides and it decreases the intracellular concentration of dUTP so that uracil cannot be incorporated into DNA. This Psychrobacter sp. (strain PRwf-1) protein is Deoxyuridine 5'-triphosphate nucleotidohydrolase.